A 384-amino-acid chain; its full sequence is Trophoblast glycoprotein-like (384 aa).

An N-terminal signal peptide occupies residues 1 to 30 (MAPRAGQRGLWSPLPGLLLLAAALSRPAAP). Intrachain disulfides connect cysteine 31-cysteine 37 and cysteine 35-cysteine 47. Over 31-309 (CPFQCYCFGS…DVAGPELEAS (279 aa)) the chain is Extracellular. LRR repeat units lie at residues 61-84 (PPDARNLTIVGANLTVLRAAAFAG), 95-118 (LPLLTALRLTHNNIEVVEDGAFDG), 119-142 (LPSLAALDLSHNPLRALGYRAFRG), 173-196 (LAELRLLGLVGNALSRLPLAALRL), and 198-219 (RLEQLDARVNALAGLGPDELSA). Asparagine 66 carries N-linked (GlcNAc...) asparagine glycosylation. 2 disulfides stabilise this stretch: cysteine 240–cysteine 266 and cysteine 242–cysteine 287. Residues 310-330 (YVFFGLVLALIGLIFLMVLYL) traverse the membrane as a helical segment. Over 331-384 (NRRGIQRWMHNLREACRDQMEGYHYRYEQDADPRRAPAPAAPAGSRATSPGSGL) the chain is Cytoplasmic. Positions 361-384 (ADPRRAPAPAAPAGSRATSPGSGL) are disordered. Low complexity predominate over residues 367–384 (PAPAAPAGSRATSPGSGL).

It is found in the membrane. The chain is Trophoblast glycoprotein-like (Tpbgl) from Mus musculus (Mouse).